The following is a 61-amino-acid chain: Photosystem II reaction center protein K (61 aa).

Residues 1-24 constitute a propeptide that is removed on maturation; it reads MLNIFSLICICLNSVLYSSSFFVA. A helical membrane pass occupies residues 40–60; sequence MPVIPVLFFLLAFVWQAAVSF.

This sequence belongs to the PsbK family. As to quaternary structure, PSII is composed of 1 copy each of membrane proteins PsbA, PsbB, PsbC, PsbD, PsbE, PsbF, PsbH, PsbI, PsbJ, PsbK, PsbL, PsbM, PsbT, PsbX, PsbY, PsbZ, Psb30/Ycf12, at least 3 peripheral proteins of the oxygen-evolving complex and a large number of cofactors. It forms dimeric complexes.

It is found in the plastid. Its subcellular location is the chloroplast thylakoid membrane. Its function is as follows. One of the components of the core complex of photosystem II (PSII). PSII is a light-driven water:plastoquinone oxidoreductase that uses light energy to abstract electrons from H(2)O, generating O(2) and a proton gradient subsequently used for ATP formation. It consists of a core antenna complex that captures photons, and an electron transfer chain that converts photonic excitation into a charge separation. This is Photosystem II reaction center protein K from Morus indica (Mulberry).